The following is a 447-amino-acid chain: uncharacterized protein (447 aa).

Residues 392–435 (RFTKPSSSVAKSTSPSLRNSGSDESDLNQSDSDKEDERVVPVPK) form a disordered region. The segment covering 395–407 (KPSSSVAKSTSPS) has biased composition (low complexity). The span at 408 to 421 (LRNSGSDESDLNQS) shows a compositional bias: polar residues.

This is an uncharacterized protein from Invertebrate iridescent virus 3 (IIV-3).